Here is a 320-residue protein sequence, read N- to C-terminus: Cytochrome f (320 aa).

The first 35 residues, 1-35 (MENRNTFSWVKEQMTRSISVSIMIYVITQTSISNA), serve as a signal peptide directing secretion. Heme is bound by residues Tyr36, Cys56, Cys59, and His60. Residues 286-306 (VQGLLFFFASVILAQVFLVLK) traverse the membrane as a helical segment.

The protein belongs to the cytochrome f family. As to quaternary structure, the 4 large subunits of the cytochrome b6-f complex are cytochrome b6, subunit IV (17 kDa polypeptide, petD), cytochrome f and the Rieske protein, while the 4 small subunits are PetG, PetL, PetM and PetN. The complex functions as a dimer. Heme serves as cofactor.

The protein resides in the plastid. It is found in the chloroplast thylakoid membrane. In terms of biological role, component of the cytochrome b6-f complex, which mediates electron transfer between photosystem II (PSII) and photosystem I (PSI), cyclic electron flow around PSI, and state transitions. The polypeptide is Cytochrome f (Agrostis stolonifera (Creeping bentgrass)).